A 1347-amino-acid polypeptide reads, in one-letter code: MIQQFTLLFLYLSFATAKAITGIFNSIDSLTWSNAGNYAFKGPGYPTWNAVLGWSLDGTSANPGDTFILNMPCVFKFTASQKSVDLTADGVKYATCQFYSGEEFTTFSSLKCTVNNNLRSSIKALGTVTLPIAFNVGGTGSSVDLEDSKCFTAGTNTVTFNDGSKKLSIAVNFEKSTVDQSGYLTTSRFMPSLNKIATLYVAPQCENGYTSGTMGFSTSYGDVAIDCSNVHIGISKGVNDWNHPVTSESFSYTKSCSSFGISITYQNVPAGYRPFIDAYISPSDNNQYQLSYKNDYTCVDDYWQHAPFTLKWTGYKNSDAGSNGIVIVATTRTVTDSTTAVTTLPFNPSVDKTKTIEILQPIPTTTITTSYVGVTTSYSTKTAPIGETATVIVDVPYHTTTTVTSEWTGTITTTTTRTNPTDSIDTVVVQVPLPNPTTTTTQFWSESFTSTTTITNSLKGTDSVIVREPHNPTVTTTEFWSESYATTETITNGPEGTDSVIVREPHNPTVTTTEFWSESYATTETVTNKPEGTDSVIIKEPHNPTVTTTEFWSESYATTETITTGPLGTDSIVIHDPLEESSSTTAIESSDSNISSSAQESSSSVEQSSSIVGLSSSSDIPLSSDMPSSSSTGLTSSESSTVSSYDSDSSSSSELSTFSSSESYSSSISDTTNFWDSSSSDLESTSITWSSSIDAQSSQSVQSVSNSISTSQETTSSSGEESNTSVTDILVSSDASSILNSDISSYYPSSTISLSDDFPHTIAGEPDSRSSSSIASTVEISSDLVSLTSDPTSSFDSSSSLNSDSSSSPFSDESDISASSSFSTLVAPSFSLSSSSSLSLTYPHYVNSTTYHASESESSSVASPSMASESANDDTHTLSESTDTTSSIGTDSSTVTFCRRDNGDGCIVTGMPSSSIDSEQTSDVTTTSSFVASSTPTSAEQSITDNPNIDSSQTSASSSTKSSVSVSDTVVNSISLSETSTLSSDDSTSSDTSISSTTNSDTGNINAGSSHTSTASIKESSIQKTGVMLSSSYLSTKLSSTSDITTELITTELITTELTTIEDNEPNTFTSTPSSHSEIFSSDNSVLSKQVDRESTIKTSPTTDVTTVSSLSVHSTEASTATLGENSFSNVASTPSNIATSLRSTSSSSNHATESSGTVKSEASAEAIPSPPTSTDNRLSYSTEEAKGITYANSGSTNNLITESQVAAPTDSTSVLIENPVVTSTFDDNSSAAVDQPSKTKSIEESIMNPDSTNETNNGFIATLSQAQVPNSLIHSESISTTMAKTTDASINGDSAASNSQPTTLIQQVATSSYNQPLITTYAGSSSATKHPSWLLKFISVALFFFL.

The first 19 residues, 1-19, serve as a signal peptide directing secretion; it reads MIQQFTLLFLYLSFATAKA. Cystine bridges form between Cys73–Cys150, Cys96–Cys112, Cys205–Cys298, and Cys227–Cys256. 6 ALS repeats span residues 365–396, 401–432, 438–469, 474–505, 510–541, and 546–577; these read TTIT…VDVP, TTVT…VQVP, TTTT…VREP, VTTT…VREP, VTTT…IKEP, and VTTT…IHDP. Disordered stretches follow at residues 580 to 678, 704 to 725, and 789 to 813; these read ESSS…WDSS, VSNS…SNTS, and SDPT…FSDE. Residues Asn593 and Asn723 are each glycosylated (N-linked (GlcNAc...) asparagine). N-linked (GlcNAc...) asparagine glycosylation occurs at Asn847. 5 disordered regions span residues 855–896, 909–964, 977–1021, 1062–1111, and 1139–1180; these read ESES…STVT, TGMP…KSSV, SETS…KESS, EDNE…VSSL, and ATSL…NRLS. Composition is skewed to low complexity over residues 856–870, 879–896, and 921–939; these read SESS…ASES, SEST…STVT, and TSDV…PTSA. A compositionally biased stretch (polar residues) spans 940 to 950; that stretch reads EQSITDNPNID. Composition is skewed to low complexity over residues 951–964 and 977–1002; these read SSQT…KSSV and SETS…NSDT. Polar residues-rich tracts occupy residues 1003 to 1021 and 1066 to 1088; these read GNIN…KESS and PNTF…SVLS. Composition is skewed to low complexity over residues 1097 to 1111 and 1140 to 1158; these read IKTS…VSSL and TSLR…SSGT. N-linked (GlcNAc...) asparagine glycans are attached at residues Asn1229 and Asn1254. The GPI-anchor amidated serine moiety is linked to residue Ser1326. Positions 1327–1347 are cleaved as a propeptide — removed in mature form; sequence SATKHPSWLLKFISVALFFFL.

This sequence belongs to the ALS family. As to quaternary structure, forms homodimers through the tandem repeats. Aggregates in amyloid-like structures, with self-propagating secondary-structure changes, amyloid-characteristic dye binding, and induced birefringence. Post-translationally, the GPI-anchor is attached to the protein in the endoplasmic reticulum and serves to target the protein to the cell surface. There, the glucosamine-inositol phospholipid moiety is cleaved off and the GPI-modified mannoprotein is covalently attached via its lipidless GPI glycan remnant to the 1,6-beta-glucan of the outer cell wall layer.

It is found in the cell membrane. Its subcellular location is the secreted. The protein localises to the cell wall. In terms of biological role, cell surface adhesion protein which mediates both yeast-to-host tissue adherence and yeast aggregation. Plays an important role in the pathogenesis of C.albicans infections. Forms amyloid structures, essential for cell-cell association and cell-substrate adhesion to polystyrene. The protein is Agglutinin-like protein 5 (ALS5) of Candida albicans (strain SC5314 / ATCC MYA-2876) (Yeast).